The following is a 430-amino-acid chain: Putative chloroquine resistance transporter (430 aa).

Residues 1-22 (MLKEGSSLDLSASSSSGTLRSD) are disordered. Residues 1–53 (MLKEGSSLDLSASSSSGTLRSDNSFGNSPLDRITSLLILIYKSIRACFKWIYS) are Cytoplasmic-facing. Over residues 7-21 (SLDLSASSSSGTLRS) the composition is skewed to low complexity. Residues 54-74 (KSFGIICILFVILDVLTTVFF) form a helical membrane-spanning segment. Residues 75–88 (KRFIDHTKNYVMFT) lie on the Vacuolar side of the membrane. A helical transmembrane segment spans residues 89-109 (IQVIIFTFWIIVCCIAILCFL). The Cytoplasmic portion of the chain corresponds to 110–122 (FNREYMKRHFNVR). A helical membrane pass occupies residues 123 to 143 (PLVFLGFLDMLSTGLSANGSA). Topologically, residues 144-147 (HTSG) are vacuolar. A helical transmembrane segment spans residues 148–168 (LMLVLLGQISVPLTMVSCKLI). The Cytoplasmic segment spans residues 169 to 173 (LSKKY). Residues 174 to 194 (HHYQYISSAIILTFAVLKPIL) form a helical membrane-spanning segment. An N-linked (GlcNAc...) asparagine glycan is attached at N195. Residues 195-206 (NRTDTTDNRFYN) lie on the Vacuolar side of the membrane. A helical membrane pass occupies residues 207–223 (NMLYLLASVPDSIASAL). Residues 224-239 (REKQYTSKFFHVVKYQ) are Cytoplasmic-facing. Residues 240 to 260 (FFGFLFHFFYNILYTLLFTLP) traverse the membrane as a helical segment. Residues 261–306 (FNSVKGYFDSLYKLCVNGYKCIFFGVNTITENCGPTLIPTCDNCLE) are Vacuolar-facing. Cystine bridges form between C281-C304 and C293-C301. The helical transmembrane segment at 307-329 (AFKIYCLYILFSSAIRVAYVFIM) threads the bilayer. At 330-335 (LDGSVT) the chain is on the cytoplasmic side. Residues 336-358 (FTLLLGTVKVPLTSIAFSLRFIA) traverse the membrane as a helical segment. Topologically, residues 359–364 (GDSTTS) are vacuolar. A helical transmembrane segment spans residues 365-385 (FNLLDVVCFLGIVAGLLLYAL). Residues 386 to 430 (GSKKIQEETDLLESPLIDDAESEHELLSTGTEKLMRSEICHDLFT) lie on the Cytoplasmic side of the membrane.

This sequence belongs to the CRT-like transporter family.

Its subcellular location is the vacuole membrane. Functionally, nutrient transporter. Involved in maintaining the osmotic homeostasis of the digestive vacuole. The polypeptide is Putative chloroquine resistance transporter (Theileria annulata).